The sequence spans 447 residues: MKTPKVGFVSLGCPKALVDSERILTQLKTDGYQVASDYDGADLVVVNTCGFIESAVQESLDAIGEAMSENGRVIVTGCLGKDEDKIRQMHPNVLKVTGAAAYQDVMEAVHEYVPAPPKHNPFIDLVPEQGIRLTPKHYAYLKISEGCNHRCTFCIIPSMRGDLVSRPVGSVLEEAAALKRAGVKEILVISQDTSAYGVDTKYKLDFWNGQPVKTKFFDMCEALGQLGIWVRLHYVYPYPHVDAVIDLMAQGKILPYLDIPFQHASPRVLKLMKRPAHSENTLEKIKLWREKCPNLVIRSTFVVGFPGETEEDFQILLDWLVEAQLDRVGCFTYSPVEGATANDLPDHVPEEIKQERYERFMQVQQQISAAKLQKRIGQTMTVLVDSLEDEYPVAVARSYADAPEIDGNVFVEDIDKSTIQPGDMLEVEITDADEYDLFAKLIKIKSV.

Residues 4–114 (PKVGFVSLGC…VMEAVHEYVP (111 aa)) enclose the MTTase N-terminal domain. [4Fe-4S] cluster contacts are provided by C13, C49, C78, C147, C151, and C154. Positions 133-370 (LTPKHYAYLK…MQVQQQISAA (238 aa)) constitute a Radical SAM core domain. Residues 373-443 (QKRIGQTMTV…EYDLFAKLIK (71 aa)) enclose the TRAM domain.

The protein belongs to the methylthiotransferase family. RimO subfamily. It depends on [4Fe-4S] cluster as a cofactor.

It localises to the cytoplasm. It catalyses the reaction L-aspartate(89)-[ribosomal protein uS12]-hydrogen + (sulfur carrier)-SH + AH2 + 2 S-adenosyl-L-methionine = 3-methylsulfanyl-L-aspartate(89)-[ribosomal protein uS12]-hydrogen + (sulfur carrier)-H + 5'-deoxyadenosine + L-methionine + A + S-adenosyl-L-homocysteine + 2 H(+). In terms of biological role, catalyzes the methylthiolation of an aspartic acid residue of ribosomal protein uS12. The chain is Ribosomal protein uS12 methylthiotransferase RimO from Acinetobacter baumannii (strain AB0057).